Consider the following 107-residue polypeptide: Probable monothiol glutaredoxin 2 (107 aa).

The region spanning 7 to 107 (FKFIENEIKN…LEKMLKAYTR (101 aa)) is the Glutaredoxin domain. Lys-24 provides a ligand contact to glutathione. Residue Cys-32 participates in [2Fe-2S] cluster binding. Glutathione contacts are provided by residues Arg-61, Phe-73, and 86–87 (CD).

Belongs to the glutaredoxin family. Monothiol subfamily.

This Rickettsia conorii (strain ATCC VR-613 / Malish 7) protein is Probable monothiol glutaredoxin 2 (grxC2).